We begin with the raw amino-acid sequence, 325 residues long: Zinc metalloproteinase/disintegrin (325 aa).

Residues 1–39 (KYENVEKGDEAPKKCGVTHTNLESDEPIEKASQLFGTSE) constitute a propeptide that is removed on maturation. Residue Gln40 is modified to Pyrrolidone carboxylic acid. Residues 46-242 (RHIELVIVAD…HNPQRILNEP (197 aa)) enclose the Peptidase M12B domain. His182 contributes to the Zn(2+) binding site. Glu183 is an active-site residue. Zn(2+) contacts are provided by His186 and His192. 2 cysteine pairs are disulfide-bonded: Cys197–Cys221 and Cys199–Cys204. Residues 243–257 (LRTDTVSTPVYGNVL) constitute a propeptide that is removed on maturation. Residues 250-322 (TPVYGNVLQN…SECESNPWNF (73 aa)) enclose the Disintegrin domain. Gln258 carries the post-translational modification Pyrrolidone carboxylic acid. Cystine bridges form between Cys264–Cys287, Cys278–Cys284, Cys283–Cys308, and Cys296–Cys315. The short motif at 300-302 (RGD) is the Cell attachment site element.

It belongs to the venom metalloproteinase (M12B) family. P-II subfamily. P-IIe sub-subfamily. As to quaternary structure, heterodimer of bitisgabonin and gabonin-1 (bitisgabonin-1) or gabonin-2 (bitisgabonin-2); disulfide-linked. Requires Zn(2+) as cofactor. As to expression, expressed by the venom gland.

It is found in the secreted. Impairs hemostasis in the envenomed animal. Functionally, in dimer with gabonin-1 (bitisgabonin-1), is a potent inhibitor of the adhesion of the RGD-dependent integrin alpha-5/beta-1 (ITGA5/ITGB1) to immobilized fibronectin. Its function is as follows. In dimer with gabonin-2 (bitisgabonin-2), preferentially inhibits the adhesion of the alpha-4/beta-1 (ITGA4/ITGB1) and alpha-9/beta-1 (ITGA9/ITGB1) integrins to VCAM-1 and also acts as a strong antagonist of alpha-5/beta-1 (ITGA5/ITGB1). This chain is Zinc metalloproteinase/disintegrin, found in Bitis gabonica (Gaboon adder).